The chain runs to 251 residues: Ditrans,polycis-undecaprenyl-diphosphate synthase ((2E,6E)-farnesyl-diphosphate specific) (251 aa).

Asp-29 is an active-site residue. Asp-29 is a binding site for Mg(2+). Residues 30 to 33 (GNGK), Trp-34, Arg-42, His-46, and 74 to 76 (SSD) each bind substrate. Asn-77 functions as the Proton acceptor in the catalytic mechanism. Residues Trp-78, Arg-80, Arg-197, and 203-205 (RLS) contribute to the substrate site. Glu-216 is a Mg(2+) binding site.

Belongs to the UPP synthase family. In terms of assembly, homodimer. The cofactor is Mg(2+).

It carries out the reaction 8 isopentenyl diphosphate + (2E,6E)-farnesyl diphosphate = di-trans,octa-cis-undecaprenyl diphosphate + 8 diphosphate. Functionally, catalyzes the sequential condensation of isopentenyl diphosphate (IPP) with (2E,6E)-farnesyl diphosphate (E,E-FPP) to yield (2Z,6Z,10Z,14Z,18Z,22Z,26Z,30Z,34E,38E)-undecaprenyl diphosphate (di-trans,octa-cis-UPP). UPP is the precursor of glycosyl carrier lipid in the biosynthesis of bacterial cell wall polysaccharide components such as peptidoglycan and lipopolysaccharide. The sequence is that of Ditrans,polycis-undecaprenyl-diphosphate synthase ((2E,6E)-farnesyl-diphosphate specific) from Buchnera aphidicola subsp. Baizongia pistaciae (strain Bp).